The primary structure comprises 168 residues: MISDILAPGLRVVFCGINPGKSSAHTGFHFAHPGNRFWKVIHQAGFTDRQLRPEEELQLLDTRCGITMLVERPTVQASEVALQELRSGGRELVRKIEEYQPQALAVLGKQAFELAFNQRGAKWGKQAITIGTTQVWVLPNPSGLNRATLDKLVAAYRELDDALATRGQ.

Belongs to the uracil-DNA glycosylase (UDG) superfamily. TDG/mug family. As to quaternary structure, binds DNA as a monomer.

The protein localises to the cytoplasm. The enzyme catalyses Specifically hydrolyzes mismatched double-stranded DNA and polynucleotides, releasing free uracil.. Excises ethenocytosine and uracil, which can arise by alkylation or deamination of cytosine, respectively, from the corresponding mispairs with guanine in ds-DNA. It is capable of hydrolyzing the carbon-nitrogen bond between the sugar-phosphate backbone of the DNA and the mispaired base. The complementary strand guanine functions in substrate recognition. Required for DNA damage lesion repair in stationary-phase cells. The protein is G/U mismatch-specific DNA glycosylase of Klebsiella pneumoniae (strain 342).